Here is a 534-residue protein sequence, read N- to C-terminus: Glucose-6-phosphate isomerase (534 aa).

E356 acts as the Proton donor in catalysis. Catalysis depends on residues H387 and K502.

This sequence belongs to the GPI family.

Its subcellular location is the cytoplasm. The enzyme catalyses alpha-D-glucose 6-phosphate = beta-D-fructose 6-phosphate. Its pathway is carbohydrate biosynthesis; gluconeogenesis. It functions in the pathway carbohydrate degradation; glycolysis; D-glyceraldehyde 3-phosphate and glycerone phosphate from D-glucose: step 2/4. Functionally, catalyzes the reversible isomerization of glucose-6-phosphate to fructose-6-phosphate. This Desulfotalea psychrophila (strain LSv54 / DSM 12343) protein is Glucose-6-phosphate isomerase.